The chain runs to 219 residues: uncharacterized protein (219 aa).

Residues 1–22 (MKKRRKICYCNTALLLMILLAG) form the signal peptide. The N-palmitoyl cysteine moiety is linked to residue Cys23. A lipid anchor (S-diacylglycerol cysteine) is attached at Cys23. A disordered region spans residues 26 to 89 (SKDGEAQQPS…SAEEKSKEDN (64 aa)). The span at 32–42 (QQPSNQASAVQ) shows a compositional bias: polar residues. Positions 43-61 (TDEKHTEPEESTKIRKDEA) are enriched in basic and acidic residues.

It localises to the cell membrane. This is an uncharacterized protein from Bacillus subtilis (strain 168).